Consider the following 154-residue polypeptide: Anaerobic ribonucleoside-triphosphate reductase-activating protein (154 aa).

[4Fe-4S] cluster is bound by residues cysteine 26, cysteine 30, and cysteine 33. S-adenosyl-L-methionine contacts are provided by residues 32-34 (GCY) and glycine 74.

It belongs to the organic radical-activating enzymes family. As to quaternary structure, forms a tetramer composed of two NrdD and two NrdG subunits. The cofactor is [4Fe-4S] cluster.

The protein resides in the cytoplasm. The catalysed reaction is glycyl-[protein] + reduced [flavodoxin] + S-adenosyl-L-methionine = glycin-2-yl radical-[protein] + semiquinone [flavodoxin] + 5'-deoxyadenosine + L-methionine + H(+). Activation of anaerobic ribonucleoside-triphosphate reductase under anaerobic conditions by generation of an organic free radical, using S-adenosylmethionine and reduced flavodoxin as cosubstrates to produce 5'-deoxy-adenosine. The protein is Anaerobic ribonucleoside-triphosphate reductase-activating protein (nrdG) of Salmonella typhimurium (strain LT2 / SGSC1412 / ATCC 700720).